The sequence spans 99 residues: Co-chaperonin GroES (99 aa).

It belongs to the GroES chaperonin family. Heptamer of 7 subunits arranged in a ring. Interacts with the chaperonin GroEL.

Its subcellular location is the cytoplasm. Together with the chaperonin GroEL, plays an essential role in assisting protein folding. The GroEL-GroES system forms a nano-cage that allows encapsulation of the non-native substrate proteins and provides a physical environment optimized to promote and accelerate protein folding. GroES binds to the apical surface of the GroEL ring, thereby capping the opening of the GroEL channel. The chain is Co-chaperonin GroES from Corynebacterium kroppenstedtii (strain DSM 44385 / JCM 11950 / CIP 105744 / CCUG 35717).